A 540-amino-acid chain; its full sequence is 2,3-bisphosphoglycerate-independent phosphoglycerate mutase (540 aa).

2 residues coordinate Mn(2+): Asp24 and Ser74. The active-site Phosphoserine intermediate is Ser74. Substrate is bound by residues His135, 165 to 166 (RD), Arg197, Arg203, 268 to 271 (RPDR), and Lys341. Residues Asp408, His412, Asp449, His450, and His467 each contribute to the Mn(2+) site.

The protein belongs to the BPG-independent phosphoglycerate mutase family. In terms of assembly, monomer. It depends on Mn(2+) as a cofactor.

The catalysed reaction is (2R)-2-phosphoglycerate = (2R)-3-phosphoglycerate. It participates in carbohydrate degradation; glycolysis; pyruvate from D-glyceraldehyde 3-phosphate: step 3/5. Catalyzes the interconversion of 2-phosphoglycerate and 3-phosphoglycerate. This chain is 2,3-bisphosphoglycerate-independent phosphoglycerate mutase, found in Prochlorococcus marinus (strain SARG / CCMP1375 / SS120).